A 400-amino-acid chain; its full sequence is Probable peptidoglycan glycosyltransferase FtsW (400 aa).

Over 1-24 (MSTGSLPLGLPSRDSLDGLRNSVD) the chain is Cytoplasmic. A helical transmembrane segment spans residues 25 to 45 (LPLLAAAALLLGLGLIMVASA). Residues 46 to 63 (SMDLGERYYGNTWHFFQR) lie on the Periplasmic side of the membrane. The helical transmembrane segment at 64 to 84 (QVLFAAIGLALATVMWAIPLE) threads the bilayer. Topologically, residues 85-88 (RWER) are cytoplasmic. A helical membrane pass occupies residues 89–109 (AGPWLLILVMVLLIAVLLPGV). The Periplasmic segment spans residues 110-118 (GRTVNGATR). A helical membrane pass occupies residues 119 to 139 (WIPIGMFNLQVAEPVKLLVVM). At 140–153 (YLAGYIVRHYSALR) the chain is on the cytoplasmic side. A helical transmembrane segment spans residues 154–174 (LHLRGFVRPLVVLGFGTVLLL). At 175–177 (LQP) the chain is on the periplasmic side. A helical transmembrane segment spans residues 178 to 198 (DFGGAAIMLAIGMGMLFLAGA). A topological domain (cytoplasmic) is located at residue K199. Residues 200–220 (LWQFAALGATIAVGMAFVAVA) traverse the membrane as a helical segment. Over 221–278 (APYRVARLTAFLDPWQDPFATGFQLTQSLIAIGSGGWFGTGLGNSVQKLFYLPEAHND) the chain is Periplasmic. The helical transmembrane segment at 279-299 (FLFAVFAEEFGFIGVLALIAL) threads the bilayer. Residues 300–324 (FAVVVWRCVKIGLWAERAGHAFGSH) are Cytoplasmic-facing. Residues 325-345 (LAFGVAIWLALQSALNLAVNM) form a helical membrane-spanning segment. Over 346-354 (GLLPTKGMT) the chain is Periplasmic. The helical transmembrane segment at 355 to 375 (LPFLSYGGSSLIVTLMAIGLV) threads the bilayer. The Cytoplasmic segment spans residues 376–400 (MRVYREAQIPAPRQSTPPRRKRGQA).

The protein belongs to the SEDS family. FtsW subfamily.

Its subcellular location is the cell inner membrane. It catalyses the reaction [GlcNAc-(1-&gt;4)-Mur2Ac(oyl-L-Ala-gamma-D-Glu-L-Lys-D-Ala-D-Ala)](n)-di-trans,octa-cis-undecaprenyl diphosphate + beta-D-GlcNAc-(1-&gt;4)-Mur2Ac(oyl-L-Ala-gamma-D-Glu-L-Lys-D-Ala-D-Ala)-di-trans,octa-cis-undecaprenyl diphosphate = [GlcNAc-(1-&gt;4)-Mur2Ac(oyl-L-Ala-gamma-D-Glu-L-Lys-D-Ala-D-Ala)](n+1)-di-trans,octa-cis-undecaprenyl diphosphate + di-trans,octa-cis-undecaprenyl diphosphate + H(+). It participates in cell wall biogenesis; peptidoglycan biosynthesis. Functionally, peptidoglycan polymerase that is essential for cell division. The sequence is that of Probable peptidoglycan glycosyltransferase FtsW from Thioalkalivibrio sp. (strain K90mix).